Here is a 412-residue protein sequence, read N- to C-terminus: DNA utilization protein HofQ (412 aa).

The signal sequence occupies residues M1 to A18.

It belongs to the bacterial secretin family. PilQ subfamily.

The protein localises to the cell outer membrane. Functionally, required for the use of extracellular DNA as a nutrient. Could be the porin responsible for transport of DNA across the outer membrane. In Escherichia coli (strain K12), this protein is DNA utilization protein HofQ (hofQ).